Consider the following 682-residue polypeptide: Putative protein RhsE (682 aa).

Over residues 348 to 360 (ENGEREKAQRRSL) the composition is skewed to basic and acidic residues. Positions 348-372 (ENGEREKAQRRSLAETLQQEGSENG) are disordered.

This sequence belongs to the RHS family.

In terms of biological role, rhs elements have a nonessential function. They may play an important role in the natural ecology of the cell. This is Putative protein RhsE (rhsE) from Escherichia coli (strain K12).